A 236-amino-acid polypeptide reads, in one-letter code: Pyridoxal 5'-phosphate synthase subunit PdxT (236 aa).

61-63 (GES) lines the L-glutamine pocket. The Nucleophile role is filled by Cys-93. Residues Arg-127 and 163–164 (IR) each bind L-glutamine. Residues His-215 and Glu-217 each act as charge relay system in the active site.

Belongs to the glutaminase PdxT/SNO family. In the presence of PdxS, forms a dodecamer of heterodimers. Only shows activity in the heterodimer.

The enzyme catalyses aldehydo-D-ribose 5-phosphate + D-glyceraldehyde 3-phosphate + L-glutamine = pyridoxal 5'-phosphate + L-glutamate + phosphate + 3 H2O + H(+). The catalysed reaction is L-glutamine + H2O = L-glutamate + NH4(+). It functions in the pathway cofactor biosynthesis; pyridoxal 5'-phosphate biosynthesis. Catalyzes the hydrolysis of glutamine to glutamate and ammonia as part of the biosynthesis of pyridoxal 5'-phosphate. The resulting ammonia molecule is channeled to the active site of PdxS. This Arthrobacter sp. (strain FB24) protein is Pyridoxal 5'-phosphate synthase subunit PdxT.